The chain runs to 174 residues: ATP synthase subunit b (174 aa).

The chain crosses the membrane as a helical span at residues 18-38 (IIVVSGSFLILMFLLKHFAWG).

It belongs to the ATPase B chain family. In terms of assembly, F-type ATPases have 2 components, F(1) - the catalytic core - and F(0) - the membrane proton channel. F(1) has five subunits: alpha(3), beta(3), gamma(1), delta(1), epsilon(1). F(0) has three main subunits: a(1), b(2) and c(10-14). The alpha and beta chains form an alternating ring which encloses part of the gamma chain. F(1) is attached to F(0) by a central stalk formed by the gamma and epsilon chains, while a peripheral stalk is formed by the delta and b chains.

The protein localises to the cell membrane. Functionally, f(1)F(0) ATP synthase produces ATP from ADP in the presence of a proton or sodium gradient. F-type ATPases consist of two structural domains, F(1) containing the extramembraneous catalytic core and F(0) containing the membrane proton channel, linked together by a central stalk and a peripheral stalk. During catalysis, ATP synthesis in the catalytic domain of F(1) is coupled via a rotary mechanism of the central stalk subunits to proton translocation. In terms of biological role, component of the F(0) channel, it forms part of the peripheral stalk, linking F(1) to F(0). This chain is ATP synthase subunit b, found in Enterococcus hirae (strain ATCC 9790 / DSM 20160 / JCM 8729 / LMG 6399 / NBRC 3181 / NCIMB 6459 / NCDO 1258 / NCTC 12367 / WDCM 00089 / R).